The following is a 673-amino-acid chain: DNA ligase (673 aa).

NAD(+) contacts are provided by residues 35–39 (DAQYD), 84–85 (SL), and E115. K117 acts as the N6-AMP-lysine intermediate in catalysis. Residues R138, E178, K294, and K318 each contribute to the NAD(+) site. Residues C412, C415, C430, and C435 each contribute to the Zn(2+) site. Residues 594 to 673 (LQSDRLAGKS…DELHALLVDE (80 aa)) form the BRCT domain.

This sequence belongs to the NAD-dependent DNA ligase family. LigA subfamily. The cofactor is Mg(2+). It depends on Mn(2+) as a cofactor.

It carries out the reaction NAD(+) + (deoxyribonucleotide)n-3'-hydroxyl + 5'-phospho-(deoxyribonucleotide)m = (deoxyribonucleotide)n+m + AMP + beta-nicotinamide D-nucleotide.. In terms of biological role, DNA ligase that catalyzes the formation of phosphodiester linkages between 5'-phosphoryl and 3'-hydroxyl groups in double-stranded DNA using NAD as a coenzyme and as the energy source for the reaction. It is essential for DNA replication and repair of damaged DNA. The sequence is that of DNA ligase from Herpetosiphon aurantiacus (strain ATCC 23779 / DSM 785 / 114-95).